A 367-amino-acid chain; its full sequence is Flagellar P-ring protein (367 aa).

The N-terminal stretch at 1-21 is a signal peptide; that stretch reads MKIIQTFFIITLLWLSQGVQA.

It belongs to the FlgI family. As to quaternary structure, the basal body constitutes a major portion of the flagellar organelle and consists of four rings (L,P,S, and M) mounted on a central rod.

It localises to the periplasm. It is found in the bacterial flagellum basal body. Assembles around the rod to form the L-ring and probably protects the motor/basal body from shearing forces during rotation. The sequence is that of Flagellar P-ring protein from Nitrosococcus oceani (strain ATCC 19707 / BCRC 17464 / JCM 30415 / NCIMB 11848 / C-107).